A 132-amino-acid polypeptide reads, in one-letter code: Small ribosomal subunit protein uS9 (132 aa).

Belongs to the universal ribosomal protein uS9 family.

The protein is Small ribosomal subunit protein uS9 of Leptospira borgpetersenii serovar Hardjo-bovis (strain JB197).